Here is a 138-residue protein sequence, read N- to C-terminus: Large ribosomal subunit protein bL19 (138 aa).

The protein belongs to the bacterial ribosomal protein bL19 family.

In terms of biological role, this protein is located at the 30S-50S ribosomal subunit interface and may play a role in the structure and function of the aminoacyl-tRNA binding site. In Rickettsia felis (strain ATCC VR-1525 / URRWXCal2) (Rickettsia azadi), this protein is Large ribosomal subunit protein bL19.